The chain runs to 886 residues: 3',5'-cyclic-AMP phosphodiesterase 4A (886 aa).

The segment at M1–S128 is disordered. S13 carries the phosphoserine modification. Low complexity predominate over residues Q36–R46. Residues S51–G78 are compositionally biased toward basic and acidic residues. Over residues T93–S104 the composition is skewed to gly residues. Phosphoserine occurs at positions 119 and 123. S152 carries the phosphoserine; by MAPKAPK2 modification. A phosphoserine mark is found at S157, S165, and S209. Residues K294–P331 are disordered. Residues R315–H328 show a composition bias toward pro residues. S346 carries the phosphoserine modification. The PDEase domain maps to V357–S686. K358 participates in a covalent cross-link: Glycyl lysine isopeptide (Lys-Gly) (interchain with G-Cter in SUMO). The Proton donor role is filled by H433. Residue H433 coordinates 3',5'-cyclic AMP. Residues H433 and H437 each contribute to the AMP site. Zn(2+)-binding residues include H437, H473, D474, and D591. Residues D474, D591, Q642, and F645 each contribute to the AMP site. D474 provides a ligand contact to Mg(2+). A Mn(2+)-binding site is contributed by D474. Residues Q642 and F645 each coordinate 3',5'-cyclic AMP. Disordered stretches follow at residues A682–D705 and F866–T886. Phosphoserine is present on residues S686 and S688. Gly residues predominate over residues P876–T886.

Belongs to the cyclic nucleotide phosphodiesterase family. PDE4 subfamily. In terms of assembly, interacts with LYN (via SH3 domain). Interacts with ARRB2. Zn(2+) is required as a cofactor. Requires Mg(2+) as cofactor. It depends on Mn(2+) as a cofactor. Proteolytically cleaved by CASP3. In terms of processing, phosphorylated at Ser-119 by PKA. In terms of tissue distribution, expressed in lymphoid cell subsets including CD8-positive T cells and T-helper 2 cells. Expressed in dendritic cells. Highly expressed in liver, stomach, testis, thyroid and adrenal glands and at a lower extent in placenta, kidney, pancreas, ovary, uterus and skin. Expressed in myeloid cell subsets including dendritic cells, monocytes, macrophages, eosinophils and mast cells. Expressed in natural killer cells. Expressed in bronchial smooth muscle. As to expression, expressed at high levels in the heart and small intestine. It is also found in the brain, kidney, spleen, colon, salivary gland, ovary and peripheral blood lymphocytes. In terms of tissue distribution, expressed predominantly in skeletal muscle and brain and at lower levels in the testis. Found in specific neuronal subpopulations including cortical pyramidal neurons, horn neurons in the spinal cord and Purkinje cells in cerebellum (at protein level).

The protein localises to the cytoplasm. It is found in the perinuclear region. It localises to the cell projection. Its subcellular location is the ruffle membrane. The protein resides in the cytosol. The protein localises to the membrane. It catalyses the reaction 3',5'-cyclic AMP + H2O = AMP + H(+). The protein operates within purine metabolism; 3',5'-cyclic AMP degradation; AMP from 3',5'-cyclic AMP: step 1/1. With respect to regulation, inhibited by rolipram, cilomilast, Ro 20-1724, roflumilast and denbufylline. Inhibited by rolipram. Its activity is regulated as follows. Inhibited by rolipram and cilomilast. Functionally, hydrolyzes the second messenger 3',5'-cyclic AMP (cAMP), which is a key regulator of many important physiological processes. Its function is as follows. Efficiently hydrolyzes cAMP. Efficiently hydrolyzes cAMP. The phosphodiesterase activity is not affected by calcium, calmodulin or cyclic GMP (cGMP) levels. Does not hydrolyze cGMP. This Homo sapiens (Human) protein is 3',5'-cyclic-AMP phosphodiesterase 4A (PDE4A).